The chain runs to 380 residues: Forkhead box protein F1 (380 aa).

A compositionally biased stretch (polar residues) spans 1–19 (MTAEVQQPSVQTPAHSSPM). A disordered region spans residues 1-49 (MTAEVQQPSVQTPAHSSPMTEKPVQTPVMETSSSSSSTKAKKTNAGIRR). A DNA-binding region (fork-head) is located at residues 52-146 (KPPYSYIALI…EEGSFRRRPR (95 aa)).

The protein resides in the nucleus. This is Forkhead box protein F1 (foxf1) from Danio rerio (Zebrafish).